A 103-amino-acid chain; its full sequence is Co-chaperonin GroES (103 aa).

The protein belongs to the GroES chaperonin family. As to quaternary structure, heptamer of 7 subunits arranged in a ring. Interacts with the chaperonin GroEL.

The protein localises to the cytoplasm. Together with the chaperonin GroEL, plays an essential role in assisting protein folding. The GroEL-GroES system forms a nano-cage that allows encapsulation of the non-native substrate proteins and provides a physical environment optimized to promote and accelerate protein folding. GroES binds to the apical surface of the GroEL ring, thereby capping the opening of the GroEL channel. The polypeptide is Co-chaperonin GroES (Rippkaea orientalis (strain PCC 8801 / RF-1) (Cyanothece sp. (strain PCC 8801))).